The sequence spans 178 residues: Inner membrane-spanning protein YciB (178 aa).

Transmembrane regions (helical) follow at residues 22-42, 50-70, 72-92, 121-141, and 149-169; these read IFYA…MTYF, ASLI…AFHS, LFIK…LLGS, MAWA…AFWL, and FKVF…VVYI.

Belongs to the YciB family.

The protein resides in the cell inner membrane. Functionally, plays a role in cell envelope biogenesis, maintenance of cell envelope integrity and membrane homeostasis. The sequence is that of Inner membrane-spanning protein YciB from Photorhabdus laumondii subsp. laumondii (strain DSM 15139 / CIP 105565 / TT01) (Photorhabdus luminescens subsp. laumondii).